The sequence spans 255 residues: Ribonuclease HII (255 aa).

The RNase H type-2 domain maps to 70 to 255; it reads DLVAGIDEVG…FEPVPEFLIK (186 aa). A divalent metal cation-binding residues include D76, E77, and D168.

The protein belongs to the RNase HII family. It depends on Mn(2+) as a cofactor. Mg(2+) serves as cofactor.

The protein localises to the cytoplasm. It carries out the reaction Endonucleolytic cleavage to 5'-phosphomonoester.. Functionally, endonuclease that specifically degrades the RNA of RNA-DNA hybrids. The protein is Ribonuclease HII of Pediococcus pentosaceus (strain ATCC 25745 / CCUG 21536 / LMG 10740 / 183-1w).